A 162-amino-acid polypeptide reads, in one-letter code: uncharacterized protein (162 aa).

A helical membrane pass occupies residues 6 to 24 (SYLISIFYIILITSETTAF).

The protein localises to the membrane. This is an uncharacterized protein from Caenorhabditis elegans.